A 131-amino-acid chain; its full sequence is Small ribosomal subunit protein bS6 (131 aa).

Lys93 carries the post-translational modification N6-acetyllysine. A disordered region spans residues 98–131; it reads EASPMVKAKDERRERRDDFANETADDAEAGDSEE. Residues 104 to 116 are compositionally biased toward basic and acidic residues; sequence KAKDERRERRDDF. Residues 120–131 are compositionally biased toward acidic residues; that stretch reads TADDAEAGDSEE.

It belongs to the bacterial ribosomal protein bS6 family.

In terms of biological role, binds together with bS18 to 16S ribosomal RNA. The sequence is that of Small ribosomal subunit protein bS6 from Escherichia fergusonii (strain ATCC 35469 / DSM 13698 / CCUG 18766 / IAM 14443 / JCM 21226 / LMG 7866 / NBRC 102419 / NCTC 12128 / CDC 0568-73).